A 103-amino-acid polypeptide reads, in one-letter code: Iron-sulfur cluster assembly protein CyaY (103 aa).

This sequence belongs to the frataxin family.

In terms of biological role, involved in iron-sulfur (Fe-S) cluster assembly. May act as a regulator of Fe-S biogenesis. This is Iron-sulfur cluster assembly protein CyaY from Rickettsia rickettsii (strain Iowa).